A 353-amino-acid chain; its full sequence is uncharacterized protein (353 aa).

A signal peptide spans 1 to 24 (MRVVERAVIACYLGITIFSGIAFG).

It belongs to the chlamydial CPn_1058/CT_355/TC_0634 family.

This is an uncharacterized protein from Chlamydia trachomatis serovar D (strain ATCC VR-885 / DSM 19411 / UW-3/Cx).